An 854-amino-acid chain; its full sequence is Envelope glycoprotein B (854 aa).

The N-terminal stretch at 1-30 is a signal peptide; sequence MSKNWFPLLCASVLVVYVSIASSSTGTASG. The Virion surface segment spans residues 31–723; sequence AVTPTSPTEN…EGVVGFIKNP (693 aa). Residues Asn-40, Asn-48, and Asn-60 are each glycosylated (N-linked (GlcNAc...) asparagine; by host). Intrachain disulfides connect Cys-69/Cys-524, Cys-86/Cys-480, Cys-160/Cys-225, Cys-317/Cys-364, and Cys-546/Cys-583. Positions 127–133 are involved in fusion and/or binding to host membrane; sequence SYSFIRE. Residue Asn-183 is glycosylated (N-linked (GlcNAc...) asparagine; by host). Residues 212 to 219 are involved in fusion and/or binding to host membrane; it reads GSTWLYTT. N-linked (GlcNAc...) asparagine; by host glycans are attached at residues Asn-256, Asn-275, Asn-314, Asn-356, Asn-378, Asn-382, Asn-390, Asn-423, Asn-426, Asn-442, Asn-558, and Asn-595. Hydrophobic membrane proximal region stretches follow at residues 669–721 and 700–720; these read VEGK…GFIK and VAIG…VGFI. A helical transmembrane segment spans residues 724 to 744; that stretch reads FGSFTVILFLLAVLGVIYLIY. The Intravirion portion of the chain corresponds to 745–854; it reads MRQKRAYEKP…YQKIQNEYEV (110 aa).

The protein belongs to the herpesviridae glycoprotein B family. In terms of assembly, homotrimer; disulfide-linked. Binds to heparan sulfate proteoglycans. Interacts with gH/gL heterodimer. A proteolytic cleavage by host furin generates two subunits that remain linked by disulfide bonds.

It is found in the virion membrane. Its subcellular location is the host cell membrane. The protein localises to the host endosome membrane. It localises to the host Golgi apparatus membrane. Functionally, envelope glycoprotein that forms spikes at the surface of virion envelope. Essential for the initial attachment to heparan sulfate moieties of the host cell surface proteoglycans. Involved in fusion of viral and cellular membranes leading to virus entry into the host cell. Following initial binding to its host receptors, membrane fusion is mediated by the fusion machinery composed at least of gB and the heterodimer gH/gL. May be involved in the fusion between the virion envelope and the outer nuclear membrane during virion egress. The sequence is that of Envelope glycoprotein B from Macaca mulatta (Rhesus macaque).